Here is a 418-residue protein sequence, read N- to C-terminus: Cytochrome P450 monooxygenase ABA2 (418 aa).

Residue cysteine 355 coordinates heme.

The protein belongs to the cytochrome P450 family. It depends on heme as a cofactor.

It functions in the pathway hormone biosynthesis. Functionally, cytochrome P450 monooxygenase involved in the biosynthesis of abscisic acid (ABA), a phytohormone that acts antagonistically toward salicylic acid (SA), jasmonic acid (JA) and ethylene (ETH) signaling, to impede plant defense responses. During pathogen-host interaction, ABA plays a dual role in disease severity by increasing plant susceptibility and accelerating pathogenesis in the fungus itself. The first step of the pathway catalyzes the reaction from farnesyl diphosphate to alpha-ionylideneethane performed by the alpha-ionylideneethane synthase ABA3 via a three-step reaction mechanism involving 2 neutral intermediates, beta-farnesene and allofarnesene. The cytochrome P450 monooxygenase ABA1 might then be involved in the conversion of alpha-ionylideneethane to alpha-ionylideneacetic acid. Alpha-ionylideneacetic acid is further converted to abscisic acid in 2 steps involving the cytochrome P450 monooxygenase ABA2 and the short-chain dehydrogenase/reductase ABA4, via the intermediates 1'-deoxy-ABA or 1',4'-trans-diol-ABA, depending on the order of action of these 2 enzymes. ABA2 is responsible for the hydroxylation of carbon atom C-1' and ABA4 might be involved in the oxidation of the C-4' carbon atom. This chain is Cytochrome P450 monooxygenase ABA2, found in Pyricularia oryzae (strain Y34) (Rice blast fungus).